Consider the following 35-residue polypeptide: Photosystem II reaction center protein T (35 aa).

A helical membrane pass occupies residues Ala-3–Phe-23.

Belongs to the PsbT family. As to quaternary structure, PSII is composed of 1 copy each of membrane proteins PsbA, PsbB, PsbC, PsbD, PsbE, PsbF, PsbH, PsbI, PsbJ, PsbK, PsbL, PsbM, PsbT, PsbY, PsbZ, Psb30/Ycf12, at least 3 peripheral proteins of the oxygen-evolving complex and a large number of cofactors. It forms dimeric complexes.

The protein localises to the plastid. It localises to the chloroplast thylakoid membrane. Found at the monomer-monomer interface of the photosystem II (PS II) dimer, plays a role in assembly and dimerization of PSII. PSII is a light-driven water plastoquinone oxidoreductase, using light energy to abstract electrons from H(2)O, generating a proton gradient subsequently used for ATP formation. In Drimys granadensis, this protein is Photosystem II reaction center protein T.